The primary structure comprises 527 residues: Secologanin synthase 2 (527 aa).

The Lumenal segment spans residues 1-11 (MEMDMDIIRKA). A helical transmembrane segment spans residues 12–32 (IAATIFALVMAWAWRVLDWAW). The Cytoplasmic portion of the chain corresponds to 33–527 (FTPKRIEKRL…IYKKLERQNF (495 aa)). Cysteine 470 is a binding site for heme.

It belongs to the cytochrome P450 family. Heme serves as cofactor. In terms of tissue distribution, expressed in leaves (especially in leaf epidermis), and, to a lower extent, in roots, stems, flower buds and flowers.

Its subcellular location is the endoplasmic reticulum membrane. It carries out the reaction loganin + reduced [NADPH--hemoprotein reductase] + O2 = secologanin + oxidized [NADPH--hemoprotein reductase] + 2 H2O + H(+). It catalyses the reaction secologanin + reduced [NADPH--hemoprotein reductase] + O2 = secoxyloganin + oxidized [NADPH--hemoprotein reductase] + H2O + 2 H(+). The protein operates within alkaloid biosynthesis. Functionally, component of the seco-iridoid and derivatives monoterpenoid indole alkaloids (MIAs, e.g. secologanin) biosynthesis pathway. Catalyzes the conversion of loganin into secologanin. Catalyzes the conversion of secologanin into secoxyloganin. This is Secologanin synthase 2 from Catharanthus roseus (Madagascar periwinkle).